We begin with the raw amino-acid sequence, 212 residues long: MTDLSDIRREYAKGGLRRADLPQNPMDLFELWMTQARDAELSDPTAMCVATVDEHGQPFQRIVLLKRFDDTGFVFFTNLGSRKAQQIAANNKVSLHFPWHPLERQVSVLGEAQALSTAEVLKYFMTRPKDSQIAAWVSQQSSKLSARQVLEGKFFEMKAKFAKGDVPLPSFWGGYLVRPSSIEFWQGGEHRLHDRFIYTRHDAEWEIDRLAP.

Substrate is bound by residues 8 to 11 (RREY) and Lys-66. FMN is bound by residues 61–66 (RIVLLK), 76–77 (FT), Arg-82, Lys-83, and Gln-105. Residues Tyr-123, Arg-127, and Ser-131 each coordinate substrate. FMN is bound by residues 140–141 (QS) and Trp-185. 191 to 193 (RLH) contributes to the substrate binding site. Residue Arg-195 participates in FMN binding.

This sequence belongs to the pyridoxamine 5'-phosphate oxidase family. Homodimer. FMN is required as a cofactor.

It carries out the reaction pyridoxamine 5'-phosphate + O2 + H2O = pyridoxal 5'-phosphate + H2O2 + NH4(+). The catalysed reaction is pyridoxine 5'-phosphate + O2 = pyridoxal 5'-phosphate + H2O2. It participates in cofactor metabolism; pyridoxal 5'-phosphate salvage; pyridoxal 5'-phosphate from pyridoxamine 5'-phosphate: step 1/1. It functions in the pathway cofactor metabolism; pyridoxal 5'-phosphate salvage; pyridoxal 5'-phosphate from pyridoxine 5'-phosphate: step 1/1. Catalyzes the oxidation of either pyridoxine 5'-phosphate (PNP) or pyridoxamine 5'-phosphate (PMP) into pyridoxal 5'-phosphate (PLP). The sequence is that of Pyridoxine/pyridoxamine 5'-phosphate oxidase from Shewanella baltica (strain OS155 / ATCC BAA-1091).